A 484-amino-acid chain; its full sequence is RNA polymerase sigma-54 factor 1 (484 aa).

A DNA-binding region (H-T-H motif) is located at residues 355-374 (NLKAVAEAIQMHESTVSRVT). An RPON box motif is present at residues 444–452 (ARRTVAKYR). A disordered region spans residues 464-484 (RRDNMWSTMNSRASGGTGLDK). Residues 468-477 (MWSTMNSRAS) show a composition bias toward polar residues.

The protein belongs to the sigma-54 factor family.

Functionally, sigma factors are initiation factors that promote the attachment of RNA polymerase to specific initiation sites and are then released. This sigma factor is responsible for the expression of the nitrogen fixation genes. The chain is RNA polymerase sigma-54 factor 1 (rpoN1) from Bradyrhizobium diazoefficiens (strain JCM 10833 / BCRC 13528 / IAM 13628 / NBRC 14792 / USDA 110).